Reading from the N-terminus, the 421-residue chain is Protein ECERIFERUM 2 (421 aa).

An N-acetylmethionine modification is found at Met1.

This sequence belongs to the plant acyltransferase family. As to expression, expressed at high levels in the epidermis of stems and young siliques. Expressed in flowers.

Its subcellular location is the endoplasmic reticulum. It is found in the nucleus. Its function is as follows. Involved in biosynthesis of the epicuticular wax. Plays a role in very-long-chain fatty acid (VLCFA) biosynthesis and is required for C28 fatty acid elongation in stem. Despite its classification as a BAHD acyltransferase based on sequence homology, CER2 does not seem to share the catalytic mechanism of the members of the BAHD family. The polypeptide is Protein ECERIFERUM 2 (CER2) (Arabidopsis thaliana (Mouse-ear cress)).